The chain runs to 681 residues: MSNKNQRKTKSKDREVRKTNDSSILSKASVEKCGYPGFTVGHSYYQPFIQKSPRRSPSVNRGYWTRCMAIRFAVYQFLKNKTGKRKAIVNLGAGYDPLAFQLLSSHEYNTDDVVFYDVDYPETIENRVQMIRSDSFLSSIVLEDKEFDLDGTEIHTKNYHSFGCNLNLLNQLESCLEKYGIDYCNDAILFISEVAAVYMPRQASEKLIRWMSKFPDAHSCFFEQIAPATFDHPFANVMVKHFKEWGTPLHGLYAYPTIESLKSRWVKNGWEYVEILDVCTFWNFLMDSKLKHLCEMVEPFDEWEEFYFFLQHYSIQHASSKLVGKYDLVESPDPCMQYIRYVKSEIIFNNSPLTLRNSIYSLKRTDLPACLKELPSLRLPAVCDLDDSVIVQGGLSTAGRSKDAYLISEKDDGSIMKITTDSLTSCMGQSVVSIDKKTCMFIGGRESPKKILSSCIYFADGNWSDFPSLPYASHRASSVSIKHNGSSYVVLLAGKPFGGCLIWSDSKRKWNTLKCKDPLFYSRWGACLHWSSKLKKGILCGGMNELNEPVREVLEWEMVLRDDDHFEIVTRVLNFDVQVEILLSRIGSKVVFFGDDSKPIIVGGAAVFRTILWEEESVCINMNDYSVTGVCIEETEKRPVFTMFGISGMGNHLQIFGGGCICFSFGSCLNENATFYKLVSA.

A compositionally biased stretch (basic residues) spans 1–11; that stretch reads MSNKNQRKTKS. The tract at residues 1–21 is disordered; that stretch reads MSNKNQRKTKSKDREVRKTND. S-adenosyl-L-methionine is bound by residues Arg66, Gly92, Asp119, 165-166, and Glu193; that span reads NL.

Belongs to the methyltransferase superfamily. LCMT family.

The catalysed reaction is 7-[(3S)-3-amino-3-carboxypropyl]wyosine(37) in tRNA(Phe) + S-adenosyl-L-methionine = 7-[(3S)-(3-amino-3-methoxycarbonyl)propyl]wyosine(37) in tRNA(Phe) + S-adenosyl-L-homocysteine. It catalyses the reaction 7-[(3S)-(3-amino-3-methoxycarbonyl)propyl]wyosine(37) in tRNA(Phe) + S-adenosyl-L-methionine + CO2 = wybutosine(37) in tRNA(Phe) + S-adenosyl-L-homocysteine + 2 H(+). It participates in tRNA modification; wybutosine-tRNA(Phe) biosynthesis. Its function is as follows. Probable S-adenosyl-L-methionine-dependent methyltransferase that acts as a component of the wybutosine biosynthesis pathway. Wybutosine is a hyper modified guanosine with a tricyclic base found at the 3'-position adjacent to the anticodon of eukaryotic phenylalanine tRNA. May methylate the carboxyl group of leucine residues to form alpha-leucine ester residues. This Schizosaccharomyces pombe (strain 972 / ATCC 24843) (Fission yeast) protein is tRNA wybutosine-synthesizing protein 4 (ppm2).